The sequence spans 358 residues: Peptide chain release factor 1 (358 aa).

An N5-methylglutamine modification is found at Gln234.

This sequence belongs to the prokaryotic/mitochondrial release factor family. Methylated by PrmC. Methylation increases the termination efficiency of RF1.

It is found in the cytoplasm. Functionally, peptide chain release factor 1 directs the termination of translation in response to the peptide chain termination codons UAG and UAA. The polypeptide is Peptide chain release factor 1 (Akkermansia muciniphila (strain ATCC BAA-835 / DSM 22959 / JCM 33894 / BCRC 81048 / CCUG 64013 / CIP 107961 / Muc)).